The primary structure comprises 496 residues: MINKVKGKIIQIIGPVIDVLFENVSSLPMIYDSLEVFNPKGNQIILEVQQHIGECTVRCISMDITDGLKRGQDVFSLGTTISMPIGEEINGRVFNVVGNTIDGLGDLNNSKRISIHRNPPKFEYLSTNIDILYTGIKVIDLVEPYIKGGKIGLFGGAGVGKTVLIQELINNIAKGYGGLSVFAGVGERTREGNDLLREMISSGIIKYGDSFLEDMKNGKWDISKVDKNELKNSKATFVFGQMNEPPGARARVVLSGLTLAEYYRDSFRKGRDVLFFIDNIFRFTQAGSELSALLGRMPSAVGYQPTLASEMGTMQERITSTKNGSITSIQAVYIPADDLSDPAPATTFSHLDATTVLSRKISSLGIYPAVDPLSSTSRILSIEFIGNDHYLCAQRVKQILQRYQELQDIIAILGIEELSEEDKIIVHRARRVQRFLSQPFNVAEQFTGITGKLVNIKDTIEGFNLILDGKLDNIAEVHFNLKGTISEVIDSSKKKI.

An ATP-binding site is contributed by 155-162; it reads GGAGVGKT.

The protein belongs to the ATPase alpha/beta chains family. In terms of assembly, F-type ATPases have 2 components, CF(1) - the catalytic core - and CF(0) - the membrane proton channel. CF(1) has five subunits: alpha(3), beta(3), gamma(1), delta(1), epsilon(1). CF(0) has three main subunits: a(1), b(2) and c(9-12). The alpha and beta chains form an alternating ring which encloses part of the gamma chain. CF(1) is attached to CF(0) by a central stalk formed by the gamma and epsilon chains, while a peripheral stalk is formed by the delta and b chains.

It localises to the cell membrane. The enzyme catalyses ATP + H2O + 4 H(+)(in) = ADP + phosphate + 5 H(+)(out). Functionally, produces ATP from ADP in the presence of a proton gradient across the membrane. The catalytic sites are hosted primarily by the beta subunits. The polypeptide is ATP synthase subunit beta (Karelsulcia muelleri (strain GWSS) (Sulcia muelleri)).